Reading from the N-terminus, the 91-residue chain is DNA-directed RNA polymerase subunit omega (91 aa).

This sequence belongs to the RNA polymerase subunit omega family. As to quaternary structure, the RNAP catalytic core consists of 2 alpha, 1 beta, 1 beta' and 1 omega subunit. When a sigma factor is associated with the core the holoenzyme is formed, which can initiate transcription.

The enzyme catalyses RNA(n) + a ribonucleoside 5'-triphosphate = RNA(n+1) + diphosphate. Its function is as follows. Promotes RNA polymerase assembly. Latches the N- and C-terminal regions of the beta' subunit thereby facilitating its interaction with the beta and alpha subunits. In Shigella flexneri, this protein is DNA-directed RNA polymerase subunit omega.